Consider the following 66-residue polypeptide: Phylloseptin-H9 (66 aa).

The signal sequence occupies residues 1–22; it reads MAFLKKSLFLVLFLGLVSLSIC. A propeptide spanning residues 23–44 is cleaved from the precursor; the sequence is EEEKRETEEEENDQEEDDKSEE. The disordered stretch occupies residues 24 to 44; that stretch reads EEKRETEEEENDQEEDDKSEE. The segment covering 30–41 has biased composition (acidic residues); it reads EEEENDQEEDDK. Leucine 65 is subject to Leucine amide.

As to expression, expressed by the skin glands.

Its subcellular location is the secreted. Has antimicrobial activity. This chain is Phylloseptin-H9, found in Pithecopus hypochondrialis (Orange-legged leaf frog).